A 350-amino-acid chain; its full sequence is Glycosyltransferase 8 domain-containing protein 2 (350 aa).

The Cytoplasmic segment spans residues 1–6 (MALLRK). A helical; Signal-anchor for type II membrane protein membrane pass occupies residues 7-24 (INQVLLFLLIVTLCGILY). The Lumenal segment spans residues 25-349 (KKVHKGTMLR…AGIFKLHHPN (325 aa)). Residue Asn-234 is glycosylated (N-linked (GlcNAc...) asparagine).

The protein belongs to the glycosyltransferase 8 family.

It is found in the membrane. The protein is Glycosyltransferase 8 domain-containing protein 2 (GLT8D2) of Bos taurus (Bovine).